A 202-amino-acid polypeptide reads, in one-letter code: Small ribosomal subunit protein uS4 (202 aa).

The 64-residue stretch at S91–I154 folds into the S4 RNA-binding domain.

It belongs to the universal ribosomal protein uS4 family. As to quaternary structure, part of the 30S ribosomal subunit. Contacts protein S5. The interaction surface between S4 and S5 is involved in control of translational fidelity.

One of the primary rRNA binding proteins, it binds directly to 16S rRNA where it nucleates assembly of the body of the 30S subunit. In terms of biological role, with S5 and S12 plays an important role in translational accuracy. This Ehrlichia ruminantium (strain Gardel) protein is Small ribosomal subunit protein uS4.